The following is a 118-amino-acid chain: Mu-like prophage FluMu tail tube protein (118 aa).

The interval 12–32 is disordered; it reads RLNGKEWPSDNDGTLTPGGKE.

It to phage Mu protein M.

In Haemophilus influenzae (strain ATCC 51907 / DSM 11121 / KW20 / Rd), this protein is Mu-like prophage FluMu tail tube protein.